The following is a 577-amino-acid chain: Aspartate--tRNA(Asp/Asn) ligase (577 aa).

Residue E171 coordinates L-aspartate. An aspartate region spans residues Q195–K198. R217 serves as a coordination point for L-aspartate. ATP contacts are provided by residues R217–E219 and Q226. H444 contacts L-aspartate. E474 provides a ligand contact to ATP. R481 lines the L-aspartate pocket. G526–R529 lines the ATP pocket.

This sequence belongs to the class-II aminoacyl-tRNA synthetase family. Type 1 subfamily. In terms of assembly, homodimer.

The protein localises to the cytoplasm. It catalyses the reaction tRNA(Asx) + L-aspartate + ATP = L-aspartyl-tRNA(Asx) + AMP + diphosphate. Aspartyl-tRNA synthetase with relaxed tRNA specificity since it is able to aspartylate not only its cognate tRNA(Asp) but also tRNA(Asn). Reaction proceeds in two steps: L-aspartate is first activated by ATP to form Asp-AMP and then transferred to the acceptor end of tRNA(Asp/Asn). The chain is Aspartate--tRNA(Asp/Asn) ligase from Helicobacter pylori (strain Shi470).